The following is a 313-amino-acid chain: Pre-mRNA-splicing factor 38A (313 aa).

Residues 1–179 (MANRTVKDAN…VLEEAELLDP (179 aa)) form an N-terminal protein interaction domain region. The stretch at 172–201 (EEAELLDPRISALEEDLDEVETSEEEDDED) forms a coiled coil. The tract at residues 182–313 (SALEEDLDEV…SHKRSRRGNE (132 aa)) is disordered. A compositionally biased stretch (acidic residues) spans 184 to 202 (LEEDLDEVETSEEEDDEDE). Residues 203-224 (KPERMQSPEPHRRSYRDMDRPR) are compositionally biased toward basic and acidic residues. Basic residues-rich tracts occupy residues 225–250 (RSPS…RSPS), 260–294 (HRSK…RSHS), and 302–313 (KKSHKRSRRGNE).

The protein belongs to the PRP38 family. As to quaternary structure, component of the spliceosome B complex.

The protein resides in the nucleus. Functionally, involved in pre-mRNA splicing as a component of the spliceosome. This chain is Pre-mRNA-splicing factor 38A (prpf38a), found in Danio rerio (Zebrafish).